The following is a 103-amino-acid chain: Histone H4 (103 aa).

Gly residues predominate over residues 1–14; the sequence is MSGRGKGGKGLGKG. Positions 1-20 are disordered; the sequence is MSGRGKGGKGLGKGGAKRHR. At S2 the chain carries N-acetylserine. K6 and K13 each carry N6-acetyl-N6-methyllysine; alternate. An N6-acetyllysine modification is found at K17. A DNA-binding region spans residues 17-21; that stretch reads KRHRK. Position 21 is an N6-methyllysine (K21).

Belongs to the histone H4 family. As to quaternary structure, the nucleosome is a histone octamer containing two molecules each of H2A, H2B, H3 and H4 assembled in one H3-H4 heterotetramer and two H2A-H2B heterodimers. The octamer wraps approximately 147 bp of DNA.

The protein resides in the nucleus. It is found in the chromosome. In terms of biological role, core component of nucleosome. Nucleosomes wrap and compact DNA into chromatin, limiting DNA accessibility to the cellular machineries which require DNA as a template. Histones thereby play a central role in transcription regulation, DNA repair, DNA replication and chromosomal stability. DNA accessibility is regulated via a complex set of post-translational modifications of histones, also called histone code, and nucleosome remodeling. The polypeptide is Histone H4 (H4DEKL) (Dendronephthya klunzingeri (Klunzinger's soft coral)).